We begin with the raw amino-acid sequence, 165 residues long: Fibrinogen-binding protein (165 aa).

An N-terminal signal peptide occupies residues 1–29 (MKNKLIAKSLLTIAAIGITTTTIASTADA).

Interacts with host fibrinogen alpha chain/FGA. Interacts with host complement protein C3.

The protein localises to the secreted. Extracellular fibrinogen-binding protein that plays an important role in virulence. By interacting with the alpha chain of fibrinogen and its derivative fibrin, enhances a non-functional interaction between fibrinogen and platelets and is responsible for repression of fibrinogen-dependent platelet aggregation. In addition, assembles a fibrinogen protective shield around the bacteria which results in impaired phagocytic clearance by the host. Mechanistically, interacts with host complement C3b deposited on the surface of the bacterium via its C-terminal and then recruits fibrinogen via its N-terminal. The protein is Fibrinogen-binding protein (fib) of Staphylococcus aureus.